Reading from the N-terminus, the 530-residue chain is Light-independent protochlorophyllide reductase subunit B (530 aa).

D36 is a [4Fe-4S] cluster binding site. D290 serves as the catalytic Proton donor. Substrate is bound at residue 425-426 (GL). Residues 448-483 (LGHLGGHASETKTSSKGINQSPNNHSPAGESIHWTS) form a disordered region. Polar residues predominate over residues 458 to 473 (TKTSSKGINQSPNNHS).

This sequence belongs to the ChlB/BchB/BchZ family. In terms of assembly, protochlorophyllide reductase is composed of three subunits; ChlL, ChlN and ChlB. Forms a heterotetramer of two ChlB and two ChlN subunits. [4Fe-4S] cluster is required as a cofactor.

It carries out the reaction chlorophyllide a + oxidized 2[4Fe-4S]-[ferredoxin] + 2 ADP + 2 phosphate = protochlorophyllide a + reduced 2[4Fe-4S]-[ferredoxin] + 2 ATP + 2 H2O. The protein operates within porphyrin-containing compound metabolism; chlorophyll biosynthesis (light-independent). Functionally, component of the dark-operative protochlorophyllide reductase (DPOR) that uses Mg-ATP and reduced ferredoxin to reduce ring D of protochlorophyllide (Pchlide) to form chlorophyllide a (Chlide). This reaction is light-independent. The NB-protein (ChlN-ChlB) is the catalytic component of the complex. This is Light-independent protochlorophyllide reductase subunit B from Prochlorococcus marinus (strain SARG / CCMP1375 / SS120).